The sequence spans 505 residues: ATP synthase subunit alpha (505 aa).

Glycine 170–threonine 177 is a binding site for ATP.

This sequence belongs to the ATPase alpha/beta chains family. As to quaternary structure, F-type ATPases have 2 components, CF(1) - the catalytic core - and CF(0) - the membrane proton channel. CF(1) has five subunits: alpha(3), beta(3), gamma(1), delta(1), epsilon(1). CF(0) has four main subunits: a, b, b' and c.

The protein resides in the cellular thylakoid membrane. It catalyses the reaction ATP + H2O + 4 H(+)(in) = ADP + phosphate + 5 H(+)(out). Functionally, produces ATP from ADP in the presence of a proton gradient across the membrane. The alpha chain is a regulatory subunit. This Cyanothece sp. (strain PCC 7425 / ATCC 29141) protein is ATP synthase subunit alpha.